Here is a 271-residue protein sequence, read N- to C-terminus: Peroxiredoxin-4 (271 aa).

Positions 1–37 (MEALPLLAATTPDHGRHRRLLLLPLLLFLLPAGAVQG) are cleaved as a signal peptide. A Thioredoxin domain is found at 79–237 (AKISKPAPYW…TLRLVQAFQY (159 aa)). The active-site Cysteine sulfenic acid (-SOH) intermediate is the cysteine 124.

This sequence belongs to the peroxiredoxin family. AhpC/Prx1 subfamily. Homodimer; disulfide-linked, upon oxidation. 5 homodimers assemble to form a ring-like decamer. Can form heterodimers with PRDX1. The enzyme can be inactivated by further oxidation of the cysteine sulfenic acid (C(P)-SOH) to sulphinic acid (C(P)-SO2H) and sulphonic acid (C(P)-SO3H) instead of its condensation to a disulfide bond.

Its subcellular location is the cytoplasm. The protein resides in the endoplasmic reticulum. The catalysed reaction is a hydroperoxide + [thioredoxin]-dithiol = an alcohol + [thioredoxin]-disulfide + H2O. In terms of biological role, thiol-specific peroxidase that catalyzes the reduction of hydrogen peroxide and organic hydroperoxides to water and alcohols, respectively. Plays a role in cell protection against oxidative stress by detoxifying peroxides and as sensor of hydrogen peroxide-mediated signaling events. Regulates the activation of NF-kappa-B in the cytosol by a modulation of I-kappa-B-alpha phosphorylation. The protein is Peroxiredoxin-4 (PRDX4) of Homo sapiens (Human).